The sequence spans 441 residues: Membrane-bound protease PH1510 (441 aa).

An N-terminal signal peptide occupies residues 1-20 (MRRILLSMIVLIFLASPILA). Residue 64–67 (GGRA) coordinates substrate. Ser97 acts as the Nucleophile in catalysis. 119–124 (ACRPIL) is a substrate binding site. Residue Lys138 is the Proton donor/acceptor of the active site. The next 4 membrane-spanning stretches (helical) occupy residues 239–259 (VAYL…LTPG), 271–291 (IILA…ILLI), 307–327 (FGLF…LLFG), and 344–364 (ILII…MAAV).

It belongs to the peptidase S14 family. As to quaternary structure, homodimer.

The protein resides in the membrane. Inhibited by divalent metal cations, including Mg(2+), Mn(2+), Ca(2+) and Zn(2+). Mildly inhibited by 0.01 % SDS and 0.1% dodecyl-beta-D-maltoside. Activity is nearly abolished by 1 % SDS. Functionally, protease that cleaves its substrates preferentially near hydrophobic or aromatic amino acid residues. Can degrade casein and the stomatin homolog PH1511 (in vitro). This is Membrane-bound protease PH1510 from Pyrococcus horikoshii (strain ATCC 700860 / DSM 12428 / JCM 9974 / NBRC 100139 / OT-3).